Here is a 289-residue protein sequence, read N- to C-terminus: MHAHPDDEVIATGATMAHYAADRDTRVVLVTCTLGEMGEVLIPELINLRADHADQLGGYRIGELERACAALGVTDHRFLGGAGRWRDSGMMSSPSNADPRSFWRADLTAASEALVRIVREVRPQVMVTYDAIGDYGHPDHIRAHDVTVRAFDDAADPDFAPQAGEPWQVSKLYETALSRAAVDAAVDQLWRSDLAKTAPEGISMPSDMLLSVPDAKVTTRIEAPDFFAAKVEAMRAHRTQMTVDGFFFALVNGDGQAARATEHYVLARGTPGPPAASGKEDDLFAGLVP.

3 residues coordinate Zn(2+): H4, D7, and H140.

It belongs to the MshB deacetylase family. Zn(2+) serves as cofactor.

It carries out the reaction 1D-myo-inositol 2-acetamido-2-deoxy-alpha-D-glucopyranoside + H2O = 1D-myo-inositol 2-amino-2-deoxy-alpha-D-glucopyranoside + acetate. In terms of biological role, catalyzes the deacetylation of 1D-myo-inositol 2-acetamido-2-deoxy-alpha-D-glucopyranoside (GlcNAc-Ins) in the mycothiol biosynthesis pathway. This chain is 1D-myo-inositol 2-acetamido-2-deoxy-alpha-D-glucopyranoside deacetylase 1, found in Frankia alni (strain DSM 45986 / CECT 9034 / ACN14a).